Consider the following 269-residue polypeptide: Tropinone reductase homolog At2g29320 (269 aa).

19-43 (LVTGAASGIGYAIVEELAGFGAKIH) is a binding site for NADP(+). A substrate-binding site is contributed by Ser152. Residue Tyr166 is the Proton acceptor of the active site.

Belongs to the short-chain dehydrogenases/reductases (SDR) family. SDR65C subfamily.

The chain is Tropinone reductase homolog At2g29320 from Arabidopsis thaliana (Mouse-ear cress).